Consider the following 319-residue polypeptide: MKKKKIGLLVMAYGTPDSLDEVEAYYTHIRHGRKPSEEALQDLIGRYKAIGGISPLAKITKEQAHKLTDSMNNMFTEYEFNCYLGLKHTAPFIEDAVEEMKRDGIEQAISIVLAPHYSTFSIKAYNERAIRLSEEIGGPVIEPIDQWYDEPKFISYWADQIKETFTKIEDNEKAVVIFSAHSLPEKIIAAGDPYVEQLQYTADLIAAAANIQNYTIGWQSAGNTSDSWIGPDVQDLTRDLFEEHRYESFIYCPVGFVAEHLEVLYDNDYECKVVTDELNAAYFRPTMPNAQSTFIDCLATIVSRKMKEIVDKELILNNN.

Residues Tyr-13, Arg-30, 46-47 (RY), Ser-54, and Tyr-125 contribute to the Fe-coproporphyrin III site. Residues His-181 and Glu-262 each coordinate Fe(2+).

Belongs to the ferrochelatase family.

The protein resides in the cytoplasm. It catalyses the reaction Fe-coproporphyrin III + 2 H(+) = coproporphyrin III + Fe(2+). It functions in the pathway porphyrin-containing compound metabolism; protoheme biosynthesis. Its function is as follows. Involved in coproporphyrin-dependent heme b biosynthesis. Catalyzes the insertion of ferrous iron into coproporphyrin III to form Fe-coproporphyrin III. This is Coproporphyrin III ferrochelatase 2 from Bacillus thuringiensis subsp. konkukian (strain 97-27).